Reading from the N-terminus, the 1058-residue chain is MPKRKDIQKIMVIGSGPIIIGQAAEFDYAGTQACLALKEEGYKVILVNSNPATIMTDKEIADKVYIEPLTLEFVNRIIRKERPDAILPTLGGQTGLNMAMALSKAGILDDLEIELLGTKLSAIDQAEDRDLFKQLMQELDQPIPESTIVKTVDEAVTFARDIGYPVIVRPAFTLGGTGGGICSSEEELCEITENGLKLSPVTQCLIERSIAGFKEIEYEVMRDSADNALVVCNMENFDPVGIHTGDSIVFAPTQTLSDIENQMLRDASLKIIRALKIEGGCNVQLALDPYSFKYYVIEVNPRVSRSSALASKATGYPIAKLAAKIAVGLTLDEMINPITGTTYAMFEPTLDYVVAKIPRFPFDKFEHGERQLGTQMKATGEVMAIGRNLEESLLKACRSLEIGVCHNEMTSLSNISDEELVTKVIKAQDDRLFYLSEAIRRGYSIEELESLTKIDLFFLDKLLHIVEIEQDLQMHVEHLESLKKAKRYGFSDQKIAEIWQKDESDIRAMRHSHSLYPVYKMVDTCAAEFDAKTPYFYSTYELENESVQSNKESILVLGSGPIRIGQGVEFDYATVHSVKAIQKAGYEAIIMNSNPETVSTDFSVSDKLYFEPLTFEDVMNVIDLEQPKGVIVQFGGQTAINLAQALSEAGVTILGTQVEDLDRAEDRDLFEKALKELGIPQPQGQTATNEEEALEAAKKIGFPVLVRPSYVLGGRAMEIVENKEDLREYIRTAVKASPEHPILVDSYIFGKECEVDAISDGKSVLIPGIMEHIERAGVHSGDSMAVYPPQQLSKQIQETIAEYTKRLAIGLNCIGMMNVQFVIKNDQVYVIEVNPRASRTVPFLSKVPGIPMAQIATKLILGQPLKDLGYEDGLYPQSQLVHIKAPVFSFTKLAQVDSLLGPEMKSTGEVMGSDTSLEKALYKAFEANNSHLSEFGQIVFTIADDSKAEALSLARRFKAIGYQIMATQGTAAYFAEQGLSACLVGKIGDAANDIPTLVRHGHVQAIVNTVGIKRTADKDGQMIRSSAIEQGVPLFTALDTAKAMLTVLESRCFNIEAI.

Positions 1–401 (MPKRKDIQKI…SLLKACRSLE (401 aa)) are carboxyphosphate synthetic domain. 12 residues coordinate ATP: R129, R169, G175, G176, R208, I210, E215, G241, I242, H243, Q284, and E298. In terms of domain architecture, ATP-grasp 1 spans 133–327 (KQLMQELDQP…IAKLAAKIAV (195 aa)). Mg(2+)-binding residues include Q284, E298, and N300. Q284, E298, and N300 together coordinate Mn(2+). An oligomerization domain region spans residues 402–546 (IGVCHNEMTS…YSTYELENES (145 aa)). The tract at residues 547–929 (VQSNKESILV…ALYKAFEANN (383 aa)) is carbamoyl phosphate synthetic domain. The ATP-grasp 2 domain maps to 671 to 861 (EKALKELGIP…MAQIATKLIL (191 aa)). R707, S746, I748, E752, G777, V778, H779, S780, Q820, and E832 together coordinate ATP. Mg(2+)-binding residues include Q820, E832, and N834. Mn(2+) contacts are provided by Q820, E832, and N834. The region spanning 930 to 1058 (SHLSEFGQIV…ESRCFNIEAI (129 aa)) is the MGS-like domain. The interval 930–1058 (SHLSEFGQIV…ESRCFNIEAI (129 aa)) is allosteric domain.

The protein belongs to the CarB family. In terms of assembly, composed of two chains; the small (or glutamine) chain promotes the hydrolysis of glutamine to ammonia, which is used by the large (or ammonia) chain to synthesize carbamoyl phosphate. Tetramer of heterodimers (alpha,beta)4. Mg(2+) is required as a cofactor. Mn(2+) serves as cofactor.

It carries out the reaction hydrogencarbonate + L-glutamine + 2 ATP + H2O = carbamoyl phosphate + L-glutamate + 2 ADP + phosphate + 2 H(+). It catalyses the reaction hydrogencarbonate + NH4(+) + 2 ATP = carbamoyl phosphate + 2 ADP + phosphate + 2 H(+). It participates in amino-acid biosynthesis; L-arginine biosynthesis; carbamoyl phosphate from bicarbonate: step 1/1. Its pathway is pyrimidine metabolism; UMP biosynthesis via de novo pathway; (S)-dihydroorotate from bicarbonate: step 1/3. Its function is as follows. Large subunit of the glutamine-dependent carbamoyl phosphate synthetase (CPSase). CPSase catalyzes the formation of carbamoyl phosphate from the ammonia moiety of glutamine, carbonate, and phosphate donated by ATP, constituting the first step of 2 biosynthetic pathways, one leading to arginine and/or urea and the other to pyrimidine nucleotides. The large subunit (synthetase) binds the substrates ammonia (free or transferred from glutamine from the small subunit), hydrogencarbonate and ATP and carries out an ATP-coupled ligase reaction, activating hydrogencarbonate by forming carboxy phosphate which reacts with ammonia to form carbamoyl phosphate. This chain is Carbamoyl phosphate synthase large chain, found in Streptococcus pyogenes serotype M49 (strain NZ131).